The primary structure comprises 321 residues: Probable cell division protein WhiA (321 aa).

The segment at residues N276 to Q309 is a DNA-binding region (H-T-H motif).

This sequence belongs to the WhiA family.

Functionally, involved in cell division and chromosome segregation. The chain is Probable cell division protein WhiA from Natranaerobius thermophilus (strain ATCC BAA-1301 / DSM 18059 / JW/NM-WN-LF).